The chain runs to 197 residues: Dephospho-CoA kinase (197 aa).

One can recognise a DPCK domain in the interval 4–197 (RLGLTGSIGM…RQIRAGNIHA (194 aa)). 12–17 (GMGKST) provides a ligand contact to ATP.

The protein belongs to the CoaE family.

The protein resides in the cytoplasm. It carries out the reaction 3'-dephospho-CoA + ATP = ADP + CoA + H(+). It participates in cofactor biosynthesis; coenzyme A biosynthesis; CoA from (R)-pantothenate: step 5/5. Its function is as follows. Catalyzes the phosphorylation of the 3'-hydroxyl group of dephosphocoenzyme A to form coenzyme A. The polypeptide is Dephospho-CoA kinase (Ruegeria pomeroyi (strain ATCC 700808 / DSM 15171 / DSS-3) (Silicibacter pomeroyi)).